Consider the following 187-residue polypeptide: Dirigent protein 6 (187 aa).

Positions 1 to 29 are cleaved as a signal peptide; sequence MAFLVEKQLFKALFSFFLLVLLFSDTVLS. Cysteines 40 and 186 form a disulfide. N-linked (GlcNAc...) asparagine glycans are attached at residues asparagine 59 and asparagine 123.

Belongs to the plant dirigent protein family. Homodimer. Expressed in roots, cotyledon veins, leaf trichomes, flowers, siliques, and meristems. Present in interfascicular/vascular cambia and developing xylem.

Its subcellular location is the secreted. It is found in the extracellular space. The protein localises to the apoplast. Functionally, dirigent proteins impart stereoselectivity on the phenoxy radical-coupling reaction, yielding optically active lignans from two molecules of coniferyl alcohol in the biosynthesis of lignans, flavonolignans, and alkaloids and thus plays a central role in plant secondary metabolism. Enantiocomplementary dirigent protein that mediates the laccase-catalyzed enantioselective oxidative phenol coupling of (E)-coniferyl alcohol to (-)-pinoresinol. This Arabidopsis thaliana (Mouse-ear cress) protein is Dirigent protein 6 (DIR6).